Reading from the N-terminus, the 92-residue chain is RNA-binding protein Hfq (92 aa).

A Sm domain is found at 9 to 68; it reads DPYLNALRRERIPVSIYLVNGIKLQGQIESFDQFVILLKNTVSQMVYKHAISTVVPARSV. Residues 69-81 are compositionally biased toward polar residues; it reads SHNNGGTSHTQQA. The disordered stretch occupies residues 69–92; the sequence is SHNNGGTSHTQQAPAVEAVADKAE.

Belongs to the Hfq family. Homohexamer.

In terms of biological role, RNA chaperone that binds small regulatory RNA (sRNAs) and mRNAs to facilitate mRNA translational regulation in response to envelope stress, environmental stress and changes in metabolite concentrations. Also binds with high specificity to tRNAs. This Actinobacillus pleuropneumoniae serotype 5b (strain L20) protein is RNA-binding protein Hfq.